We begin with the raw amino-acid sequence, 222 residues long: Exosome complex component Rrp4 (222 aa).

One can recognise an S1 motif domain in the interval 63 to 131 (GDLVIGRVTG…EINRVKLTLR (69 aa)).

The protein belongs to the RRP4 family. Component of the archaeal exosome complex. Forms a trimer of Rrp4 and/or Csl4 subunits. The trimer associates with a hexameric ring-like arrangement composed of 3 Rrp41-Rrp42 heterodimers.

The protein resides in the cytoplasm. In terms of biological role, non-catalytic component of the exosome, which is a complex involved in RNA degradation. Increases the RNA binding and the efficiency of RNA degradation. Confers strong poly(A) specificity to the exosome. This is Exosome complex component Rrp4 from Methanosphaera stadtmanae (strain ATCC 43021 / DSM 3091 / JCM 11832 / MCB-3).